We begin with the raw amino-acid sequence, 519 residues long: Membrane-bound glycerophospholipid O-acyltransferase 2 (519 aa).

Transmembrane regions (helical) follow at residues 22-42, 61-81, 88-108, 184-204, 236-256, and 263-283; these read PIDQVNFVVCQLFALLAAVWF, TLLGLYLAFFCFGWYALHFLV, CIMIIAGVESMQQCCFVFALG, FMGILAGPLCSYKDYIAFIEG, LLVCGLSLLFHLTISNMLPVE, and FQATASWPTKATYLYVSLLAA. Active-site residues include Asn-341 and His-372. 3 consecutive transmembrane segments (helical) span residues 365-385, 415-435, and 443-463; these read FFLSAIWHGVYPGYYLTFLTG, LITWVATQITISYTVVPFVLL, and FYSSWYYCLHVCSILVLLLLP. The disordered stretch occupies residues 497–519; it reads FSTMNNVCNQNRDTGSRHSSLTQ.

Belongs to the membrane-bound acyltransferase family. As to expression, highly expressed in epididymis, brain, testis, and ovary.

Its subcellular location is the endoplasmic reticulum membrane. It catalyses the reaction a 1-acyl-sn-glycero-3-phosphocholine + an acyl-CoA = a 1,2-diacyl-sn-glycero-3-phosphocholine + CoA. It carries out the reaction a 1-acyl-sn-glycero-3-phosphoethanolamine + an acyl-CoA = a 1,2-diacyl-sn-glycero-3-phosphoethanolamine + CoA. The catalysed reaction is a 1-O-(1Z-alkenyl)-sn-glycero-3-phosphocholine + (9Z)-octadecenoyl-CoA = 1-O-(1Z)-alkenyl-2-(9Z)-octadecenoyl-sn-glycero-3-phosphocholine + CoA. The enzyme catalyses a 1-O-(1Z-alkenyl)-sn-glycero-3-phosphoethanolamine + (9Z)-octadecenoyl-CoA = 1-O-(1Z)-alkenyl-2-(9Z)-octadecenoyl-sn-glycero-3-phosphoethanolamine + CoA. It catalyses the reaction 1-octadecanoyl-sn-glycero-3-phosphoethanolamine + (9Z)-octadecenoyl-CoA = 1-octadecanoyl-2-(9Z-octadecenoyl)-sn-glycero-3-phosphoethanolamine + CoA. It carries out the reaction 1-octadecanoyl-sn-glycero-3-phosphocholine + (9Z)-octadecenoyl-CoA = 1-octadecanoyl-2-(9Z-octadecenoyl)-sn-glycero-3-phosphocholine + CoA. The catalysed reaction is 1-(9Z-octadecenoyl)-sn-glycero-3-phosphoethanolamine + (9Z)-octadecenoyl-CoA = 1,2-di-(9Z-octadecenoyl)-sn-glycero-3-phosphoethanolamine + CoA. The enzyme catalyses 1-hexadecanoyl-sn-glycero-3-phosphoethanolamine + (9Z)-octadecenoyl-CoA = 1-hexadecanoyl-2-(9Z-octadecenoyl)-sn-glycero-3-phosphoethanolamine + CoA. It catalyses the reaction 1-hexadecanoyl-sn-glycero-3-phosphocholine + (9Z)-octadecenoyl-CoA = 1-hexadecanoyl-2-(9Z-octadecenoyl)-sn-glycero-3-phosphocholine + CoA. It carries out the reaction (9Z)-hexadecenoyl-CoA + 1-hexadecanoyl-sn-glycero-3-phosphocholine = 1-hexadecanoyl-2-(9Z-hexadecenoyl)-sn-glycero-3-phosphocholine + CoA. The catalysed reaction is 1-hexadecanoyl-sn-glycero-3-phosphoethanolamine + (9Z)-hexadecenoyl-CoA = 1-hexadecanoyl-2-(9Z)-hexadecenoyl-sn-glycero-3-phosphoethanolamine + CoA. The enzyme catalyses (9Z,12Z)-octadecadienoyl-CoA + 1-hexadecanoyl-sn-glycero-3-phosphocholine = 1-hexadecanoyl-2-(9Z,12Z-octadecadienoyl)-sn-glycero-3-phosphocholine + CoA. It participates in lipid metabolism; phospholipid metabolism. With respect to regulation, partially inhibited by thimerosal. Functionally, acyltransferase which catalyzes the transfer of an acyl group from an acyl-CoA to a lysophospholipid leading to the production of a phospholipid and participates in the reacylation step of the phospholipid remodeling pathway also known as the Lands cycle. Catalyzes the acylation of lysophosphatidylcholine (1-acyl-sn-glycero-3-phosphocholine or LPC) and to a lesser extend lysophosphatidylethanolamine (1-acyl-sn-glycero-3-phosphoethanolamine or LPE). Does not acylates lysophosphatidic acid (LPA) and lysophosphatidylserine. Prefers oleoyl-CoA as the acyl donor. May be involved in chondrocyte differentiation. The chain is Membrane-bound glycerophospholipid O-acyltransferase 2 from Mus musculus (Mouse).